Reading from the N-terminus, the 132-residue chain is Small ribosomal subunit protein uS8c (132 aa).

Belongs to the universal ribosomal protein uS8 family. As to quaternary structure, part of the 30S ribosomal subunit.

It localises to the plastid. The protein resides in the chloroplast. Functionally, one of the primary rRNA binding proteins, it binds directly to 16S rRNA central domain where it helps coordinate assembly of the platform of the 30S subunit. This is Small ribosomal subunit protein uS8c (rps8) from Ceratophyllum demersum (Rigid hornwort).